The sequence spans 675 residues: Serine/threonine-protein kinase ATG1 (675 aa).

The Protein kinase domain maps to 25 to 328 (FVIGGEIGKG…FEDFFNDPVV (304 aa)). ATP-binding positions include 31-39 (IGKGSFAQV) and Lys-54. Asp-168 serves as the catalytic Proton acceptor. A compositionally biased stretch (basic and acidic residues) spans 339–374 (DIPKVEQKPSRDLRSLEADPQREQSELAKSPRERPL). 2 disordered regions span residues 339-455 (DIPK…ERKL) and 501-577 (RLTS…TTRS). Composition is skewed to polar residues over residues 390–399 (ANVSARTGQS), 516–538 (ATQQ…SAVQ), and 556–565 (ASRSLNTSSA).

This sequence belongs to the protein kinase superfamily. Ser/Thr protein kinase family. APG1/unc-51/ULK1 subfamily. In terms of assembly, homodimer. Forms a ternary complex with ATG13 and ATG17.

The protein localises to the cytoplasm. It localises to the preautophagosomal structure membrane. It catalyses the reaction L-seryl-[protein] + ATP = O-phospho-L-seryl-[protein] + ADP + H(+). The enzyme catalyses L-threonyl-[protein] + ATP = O-phospho-L-threonyl-[protein] + ADP + H(+). In terms of biological role, serine/threonine protein kinase involved in the cytoplasm to vacuole transport (Cvt) and found to be essential in autophagy, where it is required for the formation of autophagosomes. Involved in the clearance of protein aggregates which cannot be efficiently cleared by the proteasome. Required for selective autophagic degradation of the nucleus (nucleophagy) as well as for mitophagy which contributes to regulate mitochondrial quantity and quality by eliminating the mitochondria to a basal level to fulfill cellular energy requirements and preventing excess ROS production. Also involved in endoplasmic reticulum-specific autophagic process, in selective removal of ER-associated degradation (ERAD) substrates. Plays a key role in ATG9 and ATG23 cycling through the pre-autophagosomal structure and is necessary to promote ATG18 binding to ATG9 through phosphorylation of ATG9. Catalyzes phosphorylation of ATG4, decreasing the interaction between ATG4 and ATG8 and impairing deconjugation of PE-conjugated forms of ATG8. The chain is Serine/threonine-protein kinase ATG1 from Colletotrichum lindemuthianum (Bean anthracnose fungus).